The sequence spans 126 residues: Large ribosomal subunit protein bL19 (126 aa).

It belongs to the bacterial ribosomal protein bL19 family.

In terms of biological role, this protein is located at the 30S-50S ribosomal subunit interface and may play a role in the structure and function of the aminoacyl-tRNA binding site. The sequence is that of Large ribosomal subunit protein bL19 from Bradyrhizobium diazoefficiens (strain JCM 10833 / BCRC 13528 / IAM 13628 / NBRC 14792 / USDA 110).